The sequence spans 753 residues: METLKADLSDMSDSPEYFETLANRDLPRLPGTSKLHRAACIKRKSINLSLPSNSYSLSYRQSDDTDGDVSESQSEYRLSSGRRSRASFARALQDPQTPNTPPVSSQHRRFFSEGSFNLPNSNMSHSLNGDSTASNSSTLTPNRIYGDRNRQDYAQSSRYTLPSLPSSPSYNCPTTLRKIHTNTSSNGTSRRVSGLGSFMAQNSSETSSNRTSAYLPGSSTDEQEKRSSVTLASMPSSHSSTASLLSPLDTTSFSTKLDSTILALETDESLSRTISYATTSLPSTPGKRLSKESLAMSEASSINPEYKRIKKRANLIKELVTTEAAYLNDLIAIQQSYGLRVKECSALNPVDAQTVFGDIESLLTFTVEFHSRLYQAGEGSWRVNLDTQLIDPLPCNLGLIFLESLSEIGQIYTGYCNRQDSVFKIITKWREKPATASWIMEGDKIVQKYTNAWDLGSLIIKPLQRLLKYPLLLQKIIDVTPESSSERPDLVLSYQLLQELISGINQKQKPSHKRGSLSASHKRDAAWSLLYKATSNKSRPTTTSTELKTDARLNFQRQVLQDFRQRFAILKALHATLETWYVTVHRGFSVFEKVLAELEGLSALEPEDKPVDTWRKYHLLAHMMTANLPSQIQTSLNSSILNPITNILRVIQKVIQFIISAEFVIPAQKLEAISTLVEKEFHSVVYHFIGIQRSLYENYAQGFLFLIPQDMRDSILEETQDYAELVRAFEPMHYDDEVLLEELMKSVSLAARV.

Disordered regions lie at residues 52–150, 175–194, and 200–245; these read SNSY…DRNR, TLRK…RVSG, and AQNS…ASLL. 4 stretches are compositionally biased toward polar residues: residues 94 to 105, 114 to 141, 181 to 191, and 200 to 220; these read DPQTPNTPPVSS, GSFN…TLTP, TNTSSNGTSRR, and AQNS…GSST. The segment covering 230 to 245 has biased composition (low complexity); it reads TLASMPSSHSSTASLL. Residues 311–507 form the DH domain; the sequence is KRANLIKELV…QELISGINQK (197 aa).

Interacts with cdc42.

It localises to the cytoplasm. Has a role in the control of cell polarity and cytokinesis. Involved in bipolar growth, via modulation of cdc42-shk1-orb6 signaling, and septum formation. Stimulates guanine nucleotide exchange of cdc42. In Schizosaccharomyces pombe (strain 972 / ATCC 24843) (Fission yeast), this protein is Rho guanine nucleotide exchange factor gef1 (gef1).